Here is a 68-residue protein sequence, read N- to C-terminus: DNA-directed RNA polymerase subunit omega (68 aa).

This sequence belongs to the RNA polymerase subunit omega family. As to quaternary structure, the RNAP catalytic core consists of 2 alpha, 1 beta, 1 beta' and 1 omega subunit. When a sigma factor is associated with the core the holoenzyme is formed, which can initiate transcription.

It catalyses the reaction RNA(n) + a ribonucleoside 5'-triphosphate = RNA(n+1) + diphosphate. Functionally, promotes RNA polymerase assembly. Latches the N- and C-terminal regions of the beta' subunit thereby facilitating its interaction with the beta and alpha subunits. The sequence is that of DNA-directed RNA polymerase subunit omega from Syntrophotalea carbinolica (strain DSM 2380 / NBRC 103641 / GraBd1) (Pelobacter carbinolicus).